The following is a 285-amino-acid chain: MIINHNMSSMYANRMLGINNDQVQGNIEKLSSGQRINRAGDDASGLAVSEKMRMQIRGLNQAQKNIQNGVSFIQATEGYLQETTDILGRIRELSIQSANGIYSDEDRMQIQVEVSQLIDEVDRIASSAQFNGMNMLTGAFAANSVSGRIMQFHIGANVDQNARVYIGTMTAQSLGLVGTQGDAFAKLSIASPESANMAIATLDSALTSVNKQRADLGAYQNRFEMAAKGIGIASENLQAAESIIRDTDMASEIVDYTKNQILTQSSVAMLAQANTQAQNVLPLLS.

The protein belongs to the bacterial flagellin family. The core of the flagellum consists of several antigenically related polypeptides. Post-translationally, glycosylated. Glycosylation is not essential for motility.

It localises to the periplasmic flagellum. It is found in the periplasm. Component of the core of the flagella. The protein is Flagellar filament 30.7 kDa core protein (flaB3) of Treponema maltophilum.